The chain runs to 62 residues: Photosystem II reaction center protein Z (62 aa).

The next 2 helical transmembrane spans lie at 8 to 28 and 41 to 61; these read AVFALIATSSILLISVPVVFA and FSGTSLWIGLVFLVAILNSLI.

It belongs to the PsbZ family. PSII is composed of 1 copy each of membrane proteins PsbA, PsbB, PsbC, PsbD, PsbE, PsbF, PsbH, PsbI, PsbJ, PsbK, PsbL, PsbM, PsbT, PsbY, PsbZ, Psb30/Ycf12, at least 3 peripheral proteins of the oxygen-evolving complex and a large number of cofactors. It forms dimeric complexes.

The protein resides in the plastid. It is found in the chloroplast thylakoid membrane. In terms of biological role, may control the interaction of photosystem II (PSII) cores with the light-harvesting antenna, regulates electron flow through the 2 photosystem reaction centers. PSII is a light-driven water plastoquinone oxidoreductase, using light energy to abstract electrons from H(2)O, generating a proton gradient subsequently used for ATP formation. The protein is Photosystem II reaction center protein Z of Liriodendron tulipifera (Tuliptree).